Consider the following 981-residue polypeptide: uncharacterized protein (981 aa).

Disordered stretches follow at residues N65–S133, S149–E463, S491–L580, E592–V834, and V861–N891. Acidic residues predominate over residues S75–Y88. 3 stretches are compositionally biased toward low complexity: residues N89–S133, S149–N158, and S170–K181. The segment covering R182 to Y195 has biased composition (basic and acidic residues). Over residues T196–S206 the composition is skewed to basic residues. A compositionally biased stretch (low complexity) spans Y207–R227. Positions S228–R269 are enriched in basic residues. The segment covering S270–K292 has biased composition (basic and acidic residues). Over residues S314 to R358 the composition is skewed to basic residues. Residues R359–K452 are compositionally biased toward basic and acidic residues. Over residues S491–N553 the composition is skewed to low complexity. Composition is skewed to polar residues over residues G554–L576 and E605–E622. A compositionally biased stretch (basic and acidic residues) spans N623–N634. Low complexity-rich tracts occupy residues S635 to S820 and S867 to N891.

This is an uncharacterized protein from Dictyostelium discoideum (Social amoeba).